A 317-amino-acid chain; its full sequence is Ribosomal RNA small subunit methyltransferase H (317 aa).

Residues 36–38 (GGH), D56, F80, D102, and Q109 contribute to the S-adenosyl-L-methionine site.

The protein belongs to the methyltransferase superfamily. RsmH family.

Its subcellular location is the cytoplasm. It carries out the reaction cytidine(1402) in 16S rRNA + S-adenosyl-L-methionine = N(4)-methylcytidine(1402) in 16S rRNA + S-adenosyl-L-homocysteine + H(+). Its function is as follows. Specifically methylates the N4 position of cytidine in position 1402 (C1402) of 16S rRNA. In Baumannia cicadellinicola subsp. Homalodisca coagulata, this protein is Ribosomal RNA small subunit methyltransferase H.